The sequence spans 206 residues: MGGKWSKSSIVGWPAIRERIRRTNPAADGVGAVSRDLEKHGAITSSNTASTNADCAWLEAQEESDEVGFPVRPQVPLRPMTYKEALDLSHFLKEKGGLEGLIWSKKRQEILDLWVYNTQGIFPDWQNYTPGPGIRYPLTFGWCYELVPVDPQEVEEDTEGETNSLLHPICQHGMEDPERQVLKWRFNSRLAFEHKAREMHPEFYKN.

Gly-2 carries the N-myristoyl glycine; by host lipid modification. At Ser-6 the chain carries Phosphoserine; by host. The interval 62 to 66 (EESDE) is acidic; interacts with host PACS1 and PACS2; stabilizes the interaction of NEF/MHC-I with host AP1M1; necessary for MHC-I internalization. The tract at residues 70–79 (PVRPQVPLRP) is SH3-binding; interaction with Src family tyrosine kinases. The short motif at 73–76 (PQVP) is the PxxP; stabilizes the interaction of NEF/MHC-I with host AP1M1; necessary for MHC-I internalization element. The mediates dimerization, Nef-PTE1 interaction stretch occupies residues 109–125 (EILDLWVYNTQGIFPDW). Residues 149 to 181 (VDPQEVEEDTEGETNSLLHPICQHGMEDPERQV) form a binding to ATP6V1H region. Residues 165-166 (LL) carry the Dileucine internalization motif; necessary for CD4 internalization motif. A Diacidic; necessary for CD4 internalization motif is present at residues 175 to 176 (ED).

Belongs to the lentivirus primate group Nef protein family. As to quaternary structure, monomer; cytosolic form. Homodimer; membrane bound form. Interacts with Nef associated p21-activated kinase (PAK2); this interaction activates PAK2. Associates with the Nef-MHC-I-AP1 complex; this complex is required for MHC-I internalization. Interacts (via C-terminus) with host PI3-kinase. Interacts with host PACS1; this interaction seems to be weak. Interacts with host PACS2. Interacts with host LCK and MAPK3; these interactions inhibit the kinase activity of the latter. Interacts with host ATP6V1H; this interaction may play a role in CD4 endocytosis. Associates with the CD4-Nef-AP2 complex; this complex is required for CD4 internalization. Interacts with host AP2 subunit alpha and AP2 subunit sigma2. Interacts with TCR-zeta chain; this interaction up-regulates the Fas ligand (FasL) surface expression. Interacts with host HCK, LYN, and SRC; these interactions activate the Src family kinases. Interacts with MAP3K5; this interaction inhibits the Fas and TNFR-mediated death signals. Interacts with beta-COP and PTE1. Interacts with human RACK1; this increases Nef phosphorylation by PKC. Interacts with TP53; this interaction decreases the half-life of TP53, protecting the infected cell against p53-mediated apoptosis. Post-translationally, the virion-associated Nef proteins are cleaved by the viral protease to release the soluble C-terminal core protein. Nef is probably cleaved concomitantly with viral structural proteins on maturation of virus particles. Myristoylated. In terms of processing, phosphorylated on serine residues, probably by host PKCdelta and theta.

The protein resides in the host cell membrane. It is found in the virion. The protein localises to the secreted. It localises to the host Golgi apparatus membrane. Functionally, factor of infectivity and pathogenicity, required for optimal virus replication. Alters numerous pathways of T-lymphocyte function and down-regulates immunity surface molecules in order to evade host defense and increase viral infectivity. Alters the functionality of other immunity cells, like dendritic cells, monocytes/macrophages and NK cells. In infected CD4(+) T-lymphocytes, down-regulates the surface MHC-I, mature MHC-II, CD4, CD28, CCR5 and CXCR4 molecules. Mediates internalization and degradation of host CD4 through the interaction of with the cytoplasmic tail of CD4, the recruitment of AP-2 (clathrin adapter protein complex 2), internalization through clathrin coated pits, and subsequent transport to endosomes and lysosomes for degradation. Diverts host MHC-I molecules to the trans-Golgi network-associated endosomal compartments by an endocytic pathway to finally target them for degradation. MHC-I down-regulation may involve AP-1 (clathrin adapter protein complex 1) or possibly Src family kinase-ZAP70/Syk-PI3K cascade recruited by PACS2. In consequence infected cells are masked for immune recognition by cytotoxic T-lymphocytes. Decreasing the number of immune receptors also prevents reinfection by more HIV particles (superinfection). Down-regulates host SERINC3 and SERINC5 thereby excluding these proteins from the viral particles. Virion infectivity is drastically higher when SERINC3 or SERINC5 are excluded from the viral envelope, because these host antiviral proteins impair the membrane fusion event necessary for subsequent virion penetration. In terms of biological role, bypasses host T-cell signaling by inducing a transcriptional program nearly identical to that of anti-CD3 cell activation. Interaction with TCR-zeta chain up-regulates the Fas ligand (FasL). Increasing surface FasL molecules and decreasing surface MHC-I molecules on infected CD4(+) cells send attacking cytotoxic CD8+ T-lymphocytes into apoptosis. Its function is as follows. Plays a role in optimizing the host cell environment for viral replication without causing cell death by apoptosis. Protects the infected cells from apoptosis in order to keep them alive until the next virus generation is ready to strike. Inhibits the Fas and TNFR-mediated death signals by blocking MAP3K5/ASK1. Decreases the half-life of TP53, protecting the infected cell against p53-mediated apoptosis. Inhibits the apoptotic signals regulated by the Bcl-2 family proteins through the formation of a Nef/PI3-kinase/PAK2 complex that leads to activation of PAK2 and induces phosphorylation of host BAD. Functionally, extracellular Nef protein targets CD4(+) T-lymphocytes for apoptosis by interacting with CXCR4 surface receptors. The chain is Protein Nef from Homo sapiens (Human).